We begin with the raw amino-acid sequence, 1348 residues long: Adhesion G protein-coupled receptor F5 (1348 aa).

A signal peptide spans 1–21 (MRSPRTFTFYFLLLVICSSEA). The Extracellular segment spans residues 22–1019 (ALSTPTEPIV…LKILLDIISY (998 aa)). In terms of domain architecture, SEA spans 163–271 (PEAFITLKLK…NSFQGTPSNE (109 aa)). Ig-like domains lie at 268-366 (PSNE…LDVT), 367-464 (PIRI…IAVT), and 469-559 (ANLT…KDVT). 4 N-linked (GlcNAc...) asparagine glycosylation sites follow: Asn270, Asn286, Asn337, and Asn349. Cysteines 291 and 348 form a disulfide. A disulfide bridge connects residues Cys389 and Cys447. N-linked (GlcNAc...) asparagine glycosylation is found at Asn470, Asn538, and Asn665. Cys490 and Cys543 are disulfide-bonded. Ser818 bears the Phosphoserine mark. Residues 841–1005 (TPPFLAHPNV…SILMSPDSPD (165 aa)) enclose the GAIN-B domain. 2 disulfide bridges follow: Cys953/Cys987 and Cys972/Cys989. Residues 953 to 1005 (CVFWNFSLANNTGGWDSSGCSVEDDGRDNRDRVFCKCNHLTSFSILMSPDSPD) form a GPS region. Positions 993-1008 (TSFSILMSPDSPDPGS) are tethered agonist. A helical transmembrane segment spans residues 1020 to 1040 (IGLGFSIVSLAACLVVEAMVW). Topologically, residues 1041 to 1055 (KSVTKNRTSYMRHIC) are cytoplasmic. The helical transmembrane segment at 1056 to 1076 (IVNIAFCLLIADIWFIVAGAI) threads the bilayer. Topologically, residues 1077 to 1092 (HDGRYPLNETACVAAT) are extracellular. The helical transmembrane segment at 1093-1113 (FFIHFFYLSVFFWMLTLGLML) threads the bilayer. Residues 1114–1130 (FYRLIFILHDASKSTQK) lie on the Cytoplasmic side of the membrane. The helical transmembrane segment at 1131-1151 (AIAFSLGYGCPLIISSITVGV) threads the bilayer. At 1152–1175 (TQPQEVYMRKNACWLNWEDTRALL) the chain is on the extracellular side. A helical membrane pass occupies residues 1176 to 1196 (AFAIPALIIVVVNVSITVVVI). Residues 1197–1221 (TKILRPSIGDKPGKQEKSSLFQISK) lie on the Cytoplasmic side of the membrane. The chain crosses the membrane as a helical span at residues 1222–1242 (SIGVLTPLLGLTWGFGLATVI). Residues 1243–1250 (QGSNAVFH) are Extracellular-facing. A helical membrane pass occupies residues 1251–1271 (IIFTLLNAFQGLFILLFGCLW). Over 1272–1348 (DQKVQEALLH…NSSSAYSLLN (77 aa)) the chain is Cytoplasmic. Thr1302 carries the post-translational modification Phosphothreonine. Position 1309 is a phosphoserine (Ser1309). Residues 1328–1348 (STPETTSSSLENSSSAYSLLN) form a disordered region.

Belongs to the G-protein coupled receptor 2 family. Adhesion G-protein coupled receptor (ADGR) subfamily. In terms of assembly, homodimer; disulfide-linked. Heterodimer of 2 chains generated by proteolytic processing; the large extracellular N-terminal fragment and the membrane-bound C-terminal fragment predominantly remain associated and non-covalently linked. Fragment generates by the processing enzyme furin remains attached to the extracellular N-terminal fragment. Interacts (via N-terminal extracellular domain) with SFTPD. In terms of processing, highly glycosylated. Proteolytically cleaved at multiple sites: one in the GPS region of the GAIN-B domain (S1 site) and the other in the SEA domain (S2 site). The proteolytic cleavage at S1 site generates an extracellular subunit and a seven-transmembrane subunit. The proteolytic cleavage at S2 site generates a fragment that undergoes proteolytic cleavage by the processing enzyme furin. As to expression, widely expressed, with highest levels in lung, pancreas, kidney and heart. In the kidney, expressed more abundantly in the medulla than in the cortex, predominantly expressed in A-intercalated cells (at protein level). Expressed in endothelial cells from various tissues, including brain, heart, kidney, liver, lung and muscle. In the lung, expressed in alveolar type II (ATII) cells (at protein level). Expressed in pancreatic islets of Langerhans, predominantly in delta cells, as well as in endothelial cells. Expressed in white adipose tissue.

It localises to the cell membrane. Its activity is regulated as follows. As an adhesion G protein-coupled receptor (aGPCR) exhibits a large N-terminal extracellular domain containing highly conserved GPCR autoproteolysis-inducing (GAIN) domain. During synthesis, intracellular autoproteolytic processing of nascent chain within the GAIN domain generates a mature protein, consisting of an N-terminal fragment that is non-covalently linked to the C-terminal fragment. The mature protein is routed to the plasma membrane where the N- and C-terminal fragments remain associated, forming the holoreceptor. Dissociation of the aGPCR fragments stimulates G protein signaling through the action of the tethered-peptide agonist stalk that is occluded within the GAIN domain in the holoreceptor form. This dissociation might be induced by ligand binding, such as that of sFNDC4. In terms of biological role, adhesion G protein-coupled receptor. In alveolar type II (ATII or AT2) cells, required for normal lung surfactant homeostasis. Modulation of both surfactant secretion and uptake by ATII cells is mediated by the downstream activation of GNAQ/GNA11 proteins and may be a consequence of increased cortical F-actin assembly induced by ADGRF5 activation. In the kidney, may play a role in the regulation of acid excretion into the primary urine, possibly by regulating the surface expression of V-ATPase proton pump. As a receptor for soluble FNDC4 (sFNDC4), required for proper systemic glucose tolerance, specifically sensitizing white adipose tissue to insulin. Also plays a role in sFNDC4-induced decrease of local inflammation in white adipose tissue. The sequence is that of Adhesion G protein-coupled receptor F5 (Adgrf5) from Mus musculus (Mouse).